The chain runs to 63 residues: Protein D-63 (63 aa).

In terms of assembly, homodimer.

Functionally, this protein may be involved in virus assembly. This Saccharolobus solfataricus (Sulfolobus solfataricus) protein is Protein D-63.